The following is a 109-amino-acid chain: UPF0060 membrane protein RHA1_ro06609 (109 aa).

Helical transmembrane passes span 7–27, 33–53, 62–82, and 88–108; these read VALFAVAALFEIGGAWLVWQG, GWIWIGAGVAALGAYGFVATL, ILAAYGGVFVAGSLIWGMVAD, and RWDVSGALICLLGMAVIMYAP.

It belongs to the UPF0060 family.

Its subcellular location is the cell membrane. The polypeptide is UPF0060 membrane protein RHA1_ro06609 (Rhodococcus jostii (strain RHA1)).